Reading from the N-terminus, the 225-residue chain is Cytidylate kinase (225 aa).

11–19 (GPSGAGKGT) contributes to the ATP binding site.

It belongs to the cytidylate kinase family. Type 1 subfamily.

The protein resides in the cytoplasm. It catalyses the reaction CMP + ATP = CDP + ADP. It carries out the reaction dCMP + ATP = dCDP + ADP. This is Cytidylate kinase from Mannheimia succiniciproducens (strain KCTC 0769BP / MBEL55E).